A 268-amino-acid chain; its full sequence is Embryonic abundant protein USP92 (268 aa).

Residues 1 to 22 (MEFAHLTVLSLFCLAFVGITAT) form the signal peptide. 5 consecutive repeat copies span residues 50–55 (GKTNSL), 83–88 (GNTNSV), 101–106 (GVTDSI), 166–183 (YVVE…MCHR), and 202–222 (YVVS…VCHH). Residues 50-106 (GKTNSLPIKSEELKQYSTLFFEHDLHPRKNFILGNTNSVGSIIRPFTKSRQGVTDSI) form a 3 X 6 AA approximate repeats region. The region spanning 68–259 (LFFEHDLHPR…GNKAAAWVPN (192 aa)) is the BURP domain. The segment at 166-222 (YVVEDVKKVGDNAVMCHRLNFEKVVFNCHQVRETTAYVVSLVASDGTKTKALTVCHH) is 2 X approximate repeats. Asn259 is a glycosylation site (N-linked (GlcNAc...) asparagine).

Seed.

The sequence is that of Embryonic abundant protein USP92 from Vicia faba (Broad bean).